The following is a 1761-amino-acid chain: 6-methylsalicylic acid synthase AOL_s00215g283 (1761 aa).

The Ketosynthase family 3 (KS3) domain maps to 18-443 (QDDIAIIGMA…GTVAHAVIEQ (426 aa)). Active-site for beta-ketoacyl synthase activity residues include C190, H325, and H367. A malonyl-CoA:ACP transacylase (MAT) domain region spans residues 554 to 870 (VWVFSGHGAH…ALGKLHCHGA (317 aa)). The active-site For malonyltransferase activity is the S641. An N-terminal hotdog fold region spans residues 918-1038 (HVLLGAKHQV…GHVANNEWSK (121 aa)). The segment at 918 to 1187 (HVLLGAKHQV…NGMRFSAVEG (270 aa)) is dehydratase (DH) domain. Residues 918–1191 (HVLLGAKHQV…FSAVEGTPGA (274 aa)) form the PKS/mFAS DH domain. Residue H950 is the Proton acceptor; for dehydratase activity of the active site. The C-terminal hotdog fold stretch occupies residues 1050-1191 (LPSVKPSFAT…FSAVEGTPGA (142 aa)). Catalysis depends on D1113, which acts as the Proton donor; for dehydratase activity. Residues 1399 to 1587 (GTYLITGGLG…IVSFLWTSWN (189 aa)) form a ketoreductase (KR) domain region. The segment at 1654 to 1680 (PRKRAESSGTEAVSKGEVSEKAPVPKS) is disordered. Residues 1686–1761 (EYLQNAISEC…HLVKWFEEKI (76 aa)) form the Carrier domain. O-(pantetheine 4'-phosphoryl)serine is present on S1721.

The enzyme catalyses 3 malonyl-CoA + acetyl-CoA + NADPH + 3 H(+) = 6-methylsalicylate + 3 CO2 + NADP(+) + 4 CoA + H2O. It participates in secondary metabolite biosynthesis; terpenoid biosynthesis. Functionally, 6-methylsalicylic acid synthase; part of the gene cluster that mediates the biosynthesis of sesquiterpenyl epoxy-cyclohexenoids (SECs) such as anthrobotrisins and arthrosporols, metabolites that possess a novel hybrid carbon skeleton consisting of a polyketide-derived epoxycyclohexenol combined with a terpenoid-derived monocyclic sesquiterpenol substructure (PKS-PTS hybrid). The SEC pathway plays an important role for fungal soil colonization via decreasing fungal nematode-capturing ability. Within the pathway, the polyketide synthase (PKS) AOL_s00215g283 catalyzes the biosynthesis of 6-methylsalicylic acid (6-MSA) via condensation of 1 acetate and 3 malonate units. AOL_s00215g283 performs a series of programmed reactions including Claisen condensation, dehydration, reduction, and cyclization to yield 6-MSA. The pathway begins with the biosynthesis of 6-methylsalicylic acid (6-MSA), the first precursor of the polyketide-derived epoxycyclohexenol in arthrosporols, by the polyketide synthase (PKS) AOL_s00215g283. The 6-methylsalicylic acid decarboxylase AOL_s00215g281 then catalyzes the decarboxylation of 6-methylsalicylic acid to yield m-cresol. The cytochrome P450 monooxygenase AOL_s00215g282 further oxidizes m-cresol to yield toluquinol. With the assistance of the oxidoreductase AOL_s00215g277, the polyprenyl transferase AOL_s00215g276 catalyzes the farnesylation of toluquinol to produce farnesyl hydroquinone, the hybrid precursor for biosynthesis of SECs. Farnesyl hydroquinone undergoes epoxidation and then subsequent dehydrogenation to form farnesyl epoxy-quinone, the first and simplest SEC. The cytochrome P450 monooxygenase AOL_s00215g278 and the FAD-dependent monooxygenase AOL_s00215g279 might be involved in the oxygenation of the phenol moiety, most likely in the epoxy formation. The cytochrome P450 monooxygenases AOL_s00215g274 and AOL_s00215g280 are involved in specific regional ketone reductions at respectively C-4 and C-1 of farnesyl epoxy-quinone PubMed:33823587. The polypeptide is 6-methylsalicylic acid synthase AOL_s00215g283 (Arthrobotrys oligospora (strain ATCC 24927 / CBS 115.81 / DSM 1491) (Nematode-trapping fungus)).